The chain runs to 606 residues: NADH-ubiquinone oxidoreductase chain 5 (606 aa).

Position 1 is an N-formylmethionine (Met-1). Transmembrane regions (helical) follow at residues Phe-4–Phe-24, Ala-43–Ile-63, Met-87–Tyr-107, Phe-117–Leu-137, Leu-140–Gly-160, Ala-171–Thr-191, Leu-213–Leu-233, Thr-241–Ile-261, Ile-273–Leu-293, Leu-310–Cys-330, Met-366–Leu-386, Leu-413–Gly-433, Leu-457–Ile-477, Met-482–Leu-502, and Gly-582–Phe-602.

Core subunit of respiratory chain NADH dehydrogenase (Complex I) which is composed of 45 different subunits.

Its subcellular location is the mitochondrion inner membrane. It carries out the reaction a ubiquinone + NADH + 5 H(+)(in) = a ubiquinol + NAD(+) + 4 H(+)(out). In terms of biological role, core subunit of the mitochondrial membrane respiratory chain NADH dehydrogenase (Complex I) which catalyzes electron transfer from NADH through the respiratory chain, using ubiquinone as an electron acceptor. Essential for the catalytic activity and assembly of complex I. This is NADH-ubiquinone oxidoreductase chain 5 (MT-ND5) from Bos taurus (Bovine).